A 1112-amino-acid polypeptide reads, in one-letter code: Phytochrome E (1112 aa).

Residues 1–20 (MGFESSSSAASNMKPQPQKS) form a disordered region. Residues 217-387 (DIGALCDTVV…AFGLQLQMEL (171 aa)) form the GAF domain. Residue C322 coordinates phytochromobilin. PAS domains follow at residues 595-666 (FVCE…LQGE) and 732-803 (DYKT…LISL). Residues 877 to 1096 (YVRQEIKNPL…FFQVDLQVKT (220 aa)) enclose the Histidine kinase domain.

This sequence belongs to the phytochrome family. As to quaternary structure, homodimer. In terms of processing, contains one covalently linked phytochromobilin chromophore.

Regulatory photoreceptor which exists in two forms that are reversibly interconvertible by light: the Pr form that absorbs maximally in the red region of the spectrum and the Pfr form that absorbs maximally in the far-red region. Photoconversion of Pr to Pfr induces an array of morphogenic responses, whereas reconversion of Pfr to Pr cancels the induction of those responses. Pfr controls the expression of a number of nuclear genes including those encoding the small subunit of ribulose-bisphosphate carboxylase, chlorophyll A/B binding protein, protochlorophyllide reductase, rRNA, etc. It also controls the expression of its own gene(s) in a negative feedback fashion. This chain is Phytochrome E (PHYE), found in Arabidopsis thaliana (Mouse-ear cress).